A 274-amino-acid chain; its full sequence is Eukaryotic translation initiation factor 3 subunit J (274 aa).

Disordered stretches follow at residues Met-1–His-120 and Glu-227–Ser-246. The span at Asp-30–Val-50 shows a compositional bias: acidic residues. Positions Glu-46 to Glu-112 form a coiled coil. Composition is skewed to basic and acidic residues over residues Glu-51 to Ala-67 and Arg-79 to Ala-92. Residues Glu-93 to Glu-102 are compositionally biased toward acidic residues. Basic and acidic residues predominate over residues Ala-103 to His-120.

It belongs to the eIF-3 subunit J family. In terms of assembly, component of the eukaryotic translation initiation factor 3 (eIF-3) complex.

The protein localises to the cytoplasm. Its function is as follows. Component of the eukaryotic translation initiation factor 3 (eIF-3) complex, which is involved in protein synthesis of a specialized repertoire of mRNAs and, together with other initiation factors, stimulates binding of mRNA and methionyl-tRNAi to the 40S ribosome. The eIF-3 complex specifically targets and initiates translation of a subset of mRNAs involved in cell proliferation. This chain is Eukaryotic translation initiation factor 3 subunit J (hcr-1), found in Neurospora crassa (strain ATCC 24698 / 74-OR23-1A / CBS 708.71 / DSM 1257 / FGSC 987).